We begin with the raw amino-acid sequence, 200 residues long: Large ribosomal subunit protein uL4 (200 aa).

The tract at residues 42 to 69 (SKAQKNRSDVSGGGRKPWRQKGTGRARA) is disordered.

This sequence belongs to the universal ribosomal protein uL4 family. Part of the 50S ribosomal subunit.

Functionally, one of the primary rRNA binding proteins, this protein initially binds near the 5'-end of the 23S rRNA. It is important during the early stages of 50S assembly. It makes multiple contacts with different domains of the 23S rRNA in the assembled 50S subunit and ribosome. In terms of biological role, forms part of the polypeptide exit tunnel. This chain is Large ribosomal subunit protein uL4, found in Alcanivorax borkumensis (strain ATCC 700651 / DSM 11573 / NCIMB 13689 / SK2).